We begin with the raw amino-acid sequence, 729 residues long: Monosaccharide-sensing protein 3 (729 aa).

A run of 6 helical transmembrane segments spans residues Val-5–Ile-25, Gly-46–Val-66, Val-81–Phe-101, Leu-104–Thr-124, Thr-135–Met-155, and Leu-165–Leu-185. The tract at residues Gln-337–Tyr-372 is disordered. Polar residues predominate over residues Asn-356 to Thr-367. A Phosphoserine modification is found at Ser-446. A run of 6 helical transmembrane segments spans residues Ala-511–Met-531, Ala-557–Met-577, Met-581–Val-601, Leu-610–Ile-630, Ile-650–Leu-670, and Ile-673–Val-693.

It belongs to the major facilitator superfamily. Sugar transporter (TC 2.A.1.1) family. Weakly expressed.

The protein resides in the vacuole membrane. The catalysed reaction is D-glucose(out) + H(+)(in) = D-glucose(in) + H(+)(out). It carries out the reaction sucrose(out) + H(+)(in) = sucrose(in) + H(+)(out). Functionally, sugar proton-coupled antiporter which contributes to vacuolar sugar import (e.g. monosaccharides including glucose,sucrose and fructose), particularly during stress responses (e.g. in response to cold). The polypeptide is Monosaccharide-sensing protein 3 (Arabidopsis thaliana (Mouse-ear cress)).